The sequence spans 505 residues: Activin receptor type-1B (505 aa).

The signal sequence occupies residues Met1–Gly23. The Extracellular portion of the chain corresponds to Ser24–Glu126. The N-linked (GlcNAc...) asparagine glycan is linked to Asn43. A helical transmembrane segment spans residues Leu127–Ile149. Residues Asn150–Ile505 are Cytoplasmic-facing. The GS domain maps to Lys177–Thr206. One can recognise a Protein kinase domain in the interval Ile207–Leu497. ATP-binding positions include Ile213 to Val221 and Lys234. The active-site Proton acceptor is the Asp335. Tyr380 carries the post-translational modification Phosphotyrosine.

This sequence belongs to the protein kinase superfamily. TKL Ser/Thr protein kinase family. TGFB receptor subfamily. Forms an activin receptor complex with activin receptor type-2 (ACVR2A or ACVR2B). Part of a complex consisting of MAGI2/ARIP1, ACVR2A, ACVR1B and SMAD3. Interacts with SMAD2 and SMAD3. Interacts with SMAD7. Interacts with FKBP1A. Interacts with IGSF1. Interacts with CRIPTO. Interacts with TDP2. Interacts with TSC22D1/TSC-22. Requires Mg(2+) as cofactor. It depends on Mn(2+) as a cofactor. In terms of processing, autophosphorylated. Phosphorylated by activin receptor type-2 (ACVR2A or ACVR2B) in response to activin-binding at serine and threonine residues in the GS domain. Phosphorylation of ACVR1B by activin receptor type-2 regulates association with SMAD7. Ubiquitinated. Level of ubiquitination is regulated by the SMAD7-SMURF1 complex. Post-translationally, ubiquitinated. As to expression, urogenital ridge, testis, ovary, brain and lungs.

The protein resides in the cell membrane. The enzyme catalyses L-threonyl-[receptor-protein] + ATP = O-phospho-L-threonyl-[receptor-protein] + ADP + H(+). The catalysed reaction is L-seryl-[receptor-protein] + ATP = O-phospho-L-seryl-[receptor-protein] + ADP + H(+). Its activity is regulated as follows. Activin receptor type-2 (ACVR2A or ACVR2B) activates the type-1 receptor through phosphorylation of its regulatory GS domain. Its function is as follows. Transmembrane serine/threonine kinase activin type-1 receptor forming an activin receptor complex with activin receptor type-2 (ACVR2A or ACVR2B). Transduces the activin signal from the cell surface to the cytoplasm and is thus regulating a many physiological and pathological processes including neuronal differentiation and neuronal survival, hair follicle development and cycling, FSH production by the pituitary gland, wound healing, extracellular matrix production, immunosuppression and carcinogenesis. Activin is also thought to have a paracrine or autocrine role in follicular development in the ovary. Within the receptor complex, type-2 receptors (ACVR2A and/or ACVR2B) act as a primary activin receptors whereas the type-1 receptors like ACVR1B act as downstream transducers of activin signals. Activin binds to type-2 receptor at the plasma membrane and activates its serine-threonine kinase. The activated receptor type-2 then phosphorylates and activates the type-1 receptor such as ACVR1B. Once activated, the type-1 receptor binds and phosphorylates the SMAD proteins SMAD2 and SMAD3, on serine residues of the C-terminal tail. Soon after their association with the activin receptor and subsequent phosphorylation, SMAD2 and SMAD3 are released into the cytoplasm where they interact with the common partner SMAD4. This SMAD complex translocates into the nucleus where it mediates activin-induced transcription. Inhibitory SMAD7, which is recruited to ACVR1B through FKBP1A, can prevent the association of SMAD2 and SMAD3 with the activin receptor complex, thereby blocking the activin signal. Activin signal transduction is also antagonized by the binding to the receptor of inhibin-B via the IGSF1 inhibin coreceptor. ACVR1B also phosphorylates TDP2. The protein is Activin receptor type-1B (Acvr1b) of Rattus norvegicus (Rat).